The following is a 300-amino-acid chain: Ribosomal RNA small subunit methyltransferase H (300 aa).

S-adenosyl-L-methionine contacts are provided by residues 35-37 (GGH), Asp55, Phe82, Asp100, and Gln107.

This sequence belongs to the methyltransferase superfamily. RsmH family.

Its subcellular location is the cytoplasm. It carries out the reaction cytidine(1402) in 16S rRNA + S-adenosyl-L-methionine = N(4)-methylcytidine(1402) in 16S rRNA + S-adenosyl-L-homocysteine + H(+). Specifically methylates the N4 position of cytidine in position 1402 (C1402) of 16S rRNA. The sequence is that of Ribosomal RNA small subunit methyltransferase H from Chlamydia trachomatis serovar L2 (strain ATCC VR-902B / DSM 19102 / 434/Bu).